The sequence spans 435 residues: 5-methylthioadenosine/S-adenosylhomocysteine deaminase (435 aa).

Positions 65 and 67 each coordinate Zn(2+). Substrate contacts are provided by Glu-94, Arg-150, and His-189. His-216 serves as a coordination point for Zn(2+). Residues Glu-219 and Asp-304 each contribute to the substrate site. Asp-304 contacts Zn(2+).

Belongs to the metallo-dependent hydrolases superfamily. MTA/SAH deaminase family. Zn(2+) serves as cofactor.

The catalysed reaction is S-adenosyl-L-homocysteine + H2O + H(+) = S-inosyl-L-homocysteine + NH4(+). It catalyses the reaction S-methyl-5'-thioadenosine + H2O + H(+) = S-methyl-5'-thioinosine + NH4(+). Catalyzes the deamination of 5-methylthioadenosine and S-adenosyl-L-homocysteine into 5-methylthioinosine and S-inosyl-L-homocysteine, respectively. Is also able to deaminate adenosine. This chain is 5-methylthioadenosine/S-adenosylhomocysteine deaminase, found in Bacillus cereus (strain B4264).